A 131-amino-acid polypeptide reads, in one-letter code: Profilin-5 (131 aa).

Cysteine 13 and cysteine 115 are joined by a disulfide. The Involved in PIP2 interaction signature appears at 81–97 (AVIRGKKGAGGITIKKT). The residue at position 111 (threonine 111) is a Phosphothreonine.

The protein belongs to the profilin family. As to quaternary structure, occurs in many kinds of cells as a complex with monomeric actin in a 1:1 ratio. In terms of processing, phosphorylated by MAP kinases.

The protein resides in the cytoplasm. The protein localises to the cytoskeleton. Binds to actin and affects the structure of the cytoskeleton. At high concentrations, profilin prevents the polymerization of actin, whereas it enhances it at low concentrations. This is Profilin-5 from Phleum pratense (Common timothy).